The sequence spans 440 residues: uncharacterized protein (440 aa).

10 helical membrane-spanning segments follow: residues 26 to 46, 59 to 79, 96 to 116, 138 to 158, 211 to 231, 241 to 261, 263 to 283, 284 to 304, 394 to 414, and 418 to 438; these read NGLIWCWWLFVISLVLASSTF, FVFWILALIFGVAVAFINGVL, FFLGFFFPQMAFCNALWLKLK, LTLSVFVVWGIYCVLATSIYL, FLVFFIIPTITLITLGCYLFA, LRKPLSTLSIVIMLTDVVGII, WIIIDILLIWLNVPFVIFVIF, WVIKLVLPLAMIGTFVSSLTI, FLIIFFSIISLILATIGSVFI, and IVQISIPFYVIGGVIWFFTFI.

It to M.pneumoniae MPN_087.

Its subcellular location is the cell membrane. This is an uncharacterized protein from Mycoplasma pneumoniae (strain ATCC 29342 / M129 / Subtype 1) (Mycoplasmoides pneumoniae).